A 244-amino-acid polypeptide reads, in one-letter code: Probable hydrolase R7 (244 aa).

The N-terminal stretch at 1-20 (MTKPFILLVPGSFAPETIYA) is a signal peptide. Active-site charge relay system residues include Asp-192 and His-224. Asn-227 carries N-linked (GlcNAc...) asparagine glycosylation.

It belongs to the AB hydrolase superfamily.

It participates in secondary metabolite biosynthesis. In terms of biological role, probable hydrolase; part of the gene cluster that mediates the biosynthesis of squalestatin S1 (SQS1, also known as zaragozic acid A), a lead compound for the treatment of hyper-cholesterolemia by targeting squalene synthase (SS). Both phenylalanine and benzoic acid are known precursors of SQS1 and so it is unsurprising that the cluster also contains genes potentially involved in benzoate production such as phenyl-alanine ammonia lysase (PAL) M7, which catalyzes the first step in the degradation of phenylalanine, or the NADP-dependent dehydrogenase M3. The cluster contains two PKS encoding genes. The tetraketide synthase is responsible for the biosynthesis of the tetraketide sidechain of SQS1. The biosynthesis must involve 3 rounds of chain extension. After the first and second rounds methyl-transfer occurs, and in all rounds of extension the ketoreductase and dehydratase areactive. The enoyl reductase and C-MeT are not active in the final round of extension. The other PKS is therefore likely to encode squalestatin hexaketide synthase (SQHKS). The hexaketide main chain is initiated by benzoate which is an unusual starter unit for a highly reducing polyketide synthase. The cluster also contains a gene encoding a citrate synthase-like protein R3 presumably involved in linking the hexaketide to the oxaloacetate moiety. Formation of the tetraketide CoA may be catalyzed by the M9 CoA ligase, but the mechanism of release of the tetraketide and the hexaketide from their respective PKS remains unknown, although the cluster encodes a potential esterase (M8) and a possible hydrolase (M10) which could be involved in these processes. Two acyltransferases (AT), M4 and R4, are also encoded in the cluster. M4 is responsible for loading of the tetraketide sidechain from CoA onto the squalestatin core as the final step of biosynthesis. M4 appears to have a broad substrate selectivity for its acyl CoA substrate, allowing the in vitro synthesis of novel squalestatins. The biosynthesis of SQS1 requires several oxidative steps likely performed by oxidoreductases M1, R1 and R2. Finally, in support of the identification of the cluster as being responsible for SQS1 production, the cluster contains a gene encoding a putative squalene synthase (SS) R6, suggesting a likely mechanism for self-resistance. This chain is Probable hydrolase R7, found in Phoma sp. (strain ATCC 20986 / MF5453).